An 89-amino-acid polypeptide reads, in one-letter code: Large ribosomal subunit protein bL27 (89 aa).

Residues 1 to 23 (MAHKKAGGSSRNGRDSHSKRLGV) form a disordered region.

The protein belongs to the bacterial ribosomal protein bL27 family.

The chain is Large ribosomal subunit protein bL27 from Mesorhizobium japonicum (strain LMG 29417 / CECT 9101 / MAFF 303099) (Mesorhizobium loti (strain MAFF 303099)).